Consider the following 206-residue polypeptide: Small ribosomal subunit protein uS5 (206 aa).

Positions 1-15 (MTDTPTKQETQSNKD) are enriched in polar residues. The disordered stretch occupies residues 1–50 (MTDTPTKQETQSNKDNVPGAIPVEQKKNNRNDRKRNRRGDSKNLERDSDW). Basic and acidic residues predominate over residues 38-50 (RGDSKNLERDSDW). An S5 DRBM domain is found at 50–113 (WQERVVQIRR…SDGKKNLVRV (64 aa)).

It belongs to the universal ribosomal protein uS5 family. In terms of assembly, part of the 30S ribosomal subunit. Contacts proteins S4 and S8.

Its function is as follows. With S4 and S12 plays an important role in translational accuracy. Functionally, located at the back of the 30S subunit body where it stabilizes the conformation of the head with respect to the body. The polypeptide is Small ribosomal subunit protein uS5 (Prochlorococcus marinus (strain MIT 9215)).